The chain runs to 268 residues: Secreted RxLR effector protein 6 (268 aa).

The N-terminal stretch at 1 to 19 (MRGAFYIAIALLVVRSRTA) is a signal peptide. Positions 48–63 (RYLRDGLAHSAANEER) match the RxLR-dEER motif. Residues 90 to 123 (IGGHSHTPKSKRKVNLSPAKSQSGIRKKSTSINK) are disordered. The segment covering 107–123 (PAKSQSGIRKKSTSINK) has biased composition (polar residues).

This sequence belongs to the RxLR effector family.

The protein resides in the secreted. It localises to the host nucleus. The protein localises to the host cytoplasm. Functionally, secreted effector that completely suppresses the host cell death induced by cell death-inducing proteins. The polypeptide is Secreted RxLR effector protein 6 (Plasmopara viticola (Downy mildew of grapevine)).